Reading from the N-terminus, the 162-residue chain is 6,7-dimethyl-8-ribityllumazine synthase (162 aa).

Residues phenylalanine 22, 56–58, and 80–82 contribute to the 5-amino-6-(D-ribitylamino)uracil site; these read TFE and AVI. Residue 85–86 coordinates (2S)-2-hydroxy-3-oxobutyl phosphate; sequence GT. Catalysis depends on histidine 88, which acts as the Proton donor. Methionine 113 lines the 5-amino-6-(D-ribitylamino)uracil pocket. Arginine 127 serves as a coordination point for (2S)-2-hydroxy-3-oxobutyl phosphate.

Belongs to the DMRL synthase family.

The catalysed reaction is (2S)-2-hydroxy-3-oxobutyl phosphate + 5-amino-6-(D-ribitylamino)uracil = 6,7-dimethyl-8-(1-D-ribityl)lumazine + phosphate + 2 H2O + H(+). The protein operates within cofactor biosynthesis; riboflavin biosynthesis; riboflavin from 2-hydroxy-3-oxobutyl phosphate and 5-amino-6-(D-ribitylamino)uracil: step 1/2. Functionally, catalyzes the formation of 6,7-dimethyl-8-ribityllumazine by condensation of 5-amino-6-(D-ribitylamino)uracil with 3,4-dihydroxy-2-butanone 4-phosphate. This is the penultimate step in the biosynthesis of riboflavin. This is 6,7-dimethyl-8-ribityllumazine synthase from Anaeromyxobacter dehalogenans (strain 2CP-C).